The primary structure comprises 429 residues: Multifunctional CCA protein (429 aa).

ATP-binding residues include G27 and R30. Residues G27 and R30 each coordinate CTP. Mg(2+) contacts are provided by D40 and D42. ATP is bound by residues R110, R162, and R165. CTP-binding residues include R110, R162, and R165. The 102-residue stretch at 251–352 folds into the HD domain; that stretch reads TGVHTMMVVD…VRLLERCDAL (102 aa).

Belongs to the tRNA nucleotidyltransferase/poly(A) polymerase family. Bacterial CCA-adding enzyme type 1 subfamily. In terms of assembly, monomer. Can also form homodimers and oligomers. The cofactor is Mg(2+). Ni(2+) serves as cofactor.

It catalyses the reaction a tRNA precursor + 2 CTP + ATP = a tRNA with a 3' CCA end + 3 diphosphate. The catalysed reaction is a tRNA with a 3' CCA end + 2 CTP + ATP = a tRNA with a 3' CCACCA end + 3 diphosphate. Functionally, catalyzes the addition and repair of the essential 3'-terminal CCA sequence in tRNAs without using a nucleic acid template. Adds these three nucleotides in the order of C, C, and A to the tRNA nucleotide-73, using CTP and ATP as substrates and producing inorganic pyrophosphate. tRNA 3'-terminal CCA addition is required both for tRNA processing and repair. Also involved in tRNA surveillance by mediating tandem CCA addition to generate a CCACCA at the 3' terminus of unstable tRNAs. While stable tRNAs receive only 3'-terminal CCA, unstable tRNAs are marked with CCACCA and rapidly degraded. The sequence is that of Multifunctional CCA protein from Ralstonia nicotianae (strain ATCC BAA-1114 / GMI1000) (Ralstonia solanacearum).